A 333-amino-acid chain; its full sequence is Homoserine O-succinyltransferase (333 aa).

Cysteine 147 functions as the Acyl-thioester intermediate in the catalytic mechanism. Positions 168 and 196 each coordinate substrate. The active-site Proton acceptor is histidine 239. Glutamate 241 is a catalytic residue. Arginine 253 lines the substrate pocket.

This sequence belongs to the MetA family.

The protein resides in the cytoplasm. It catalyses the reaction L-homoserine + succinyl-CoA = O-succinyl-L-homoserine + CoA. It functions in the pathway amino-acid biosynthesis; L-methionine biosynthesis via de novo pathway; O-succinyl-L-homoserine from L-homoserine: step 1/1. Transfers a succinyl group from succinyl-CoA to L-homoserine, forming succinyl-L-homoserine. In Rhodopseudomonas palustris, this protein is Homoserine O-succinyltransferase.